A 468-amino-acid polypeptide reads, in one-letter code: Trehalose-2-sulfate acyltransferase PapA2 (468 aa).

This sequence belongs to the PapA acyltransferase family.

It catalyses the reaction 2-O-sulfo-alpha,alpha-trehalose + hexadecanoyl-CoA = 2-O-sulfo-2'-O-hexadecanoyl-alpha,alpha-trehalose + CoA. In terms of biological role, required for the biosynthesis of sulfolipid-1 (SL-1), a major mycobacterial cell wall lipid. Catalyzes the acylation of trehalose-2-sulfate by adding the palmitoyl group at the 2'-position to yield the intermediate trehalose-2-sulfate-2'-palmitate (SL659). This chain is Trehalose-2-sulfate acyltransferase PapA2 (papA2), found in Mycobacterium bovis (strain ATCC BAA-935 / AF2122/97).